We begin with the raw amino-acid sequence, 128 residues long: uncharacterized protein (128 aa).

A run of 3 helical transmembrane segments spans residues methionine 19–serine 41, leucine 54–glutamine 71, and proline 75–leucine 97.

It localises to the cell membrane. This is an uncharacterized protein from Pasteurella multocida (strain Pm70).